A 216-amino-acid polypeptide reads, in one-letter code: uncharacterized protein (216 aa).

A helical transmembrane segment spans residues 39–59 (VLPLTFIGSLLILILTIVYYF). Residues 59-108 (FTLSGSVNELKNEISKEKSKKERLLSEIKRLEELKKTLETKKAIYEVVKI) are a coiled coil.

The protein resides in the membrane. This is an uncharacterized protein from Aquifex aeolicus (strain VF5).